A 197-amino-acid polypeptide reads, in one-letter code: Small ribosomal subunit protein uS7 (197 aa).

This sequence belongs to the universal ribosomal protein uS7 family.

The polypeptide is Small ribosomal subunit protein uS7 (RPS5) (Cicer arietinum (Chickpea)).